A 597-amino-acid chain; its full sequence is Arginine--tRNA ligase (597 aa).

A 'HIGH' region motif is present at residues 124 to 134 (PNVAKPLHVGH).

The protein belongs to the class-I aminoacyl-tRNA synthetase family. In terms of assembly, monomer.

The protein resides in the cytoplasm. The enzyme catalyses tRNA(Arg) + L-arginine + ATP = L-arginyl-tRNA(Arg) + AMP + diphosphate. This Agathobacter rectalis (strain ATCC 33656 / DSM 3377 / JCM 17463 / KCTC 5835 / VPI 0990) (Eubacterium rectale) protein is Arginine--tRNA ligase.